A 160-amino-acid chain; its full sequence is Transcription elongation factor GreA (160 aa).

A coiled-coil region spans residues 3–84; sequence SIVNDKILLT…SKAKIIKADL (82 aa).

It belongs to the GreA/GreB family.

Functionally, necessary for efficient RNA polymerase transcription elongation past template-encoded arresting sites. The arresting sites in DNA have the property of trapping a certain fraction of elongating RNA polymerases that pass through, resulting in locked ternary complexes. Cleavage of the nascent transcript by cleavage factors such as GreA or GreB allows the resumption of elongation from the new 3'terminus. GreA releases sequences of 2 to 3 nucleotides. The polypeptide is Transcription elongation factor GreA (Mesomycoplasma hyopneumoniae (strain 7448) (Mycoplasma hyopneumoniae)).